A 529-amino-acid chain; its full sequence is CRISPR-associated endodeoxyribonuclease Cas12f1 (529 aa).

The segment at 1–95 is zinc finger domain (ZF); sequence MAKNTITKTL…RGQFPDAVFW (95 aa). Positions 50, 53, 69, and 72 each coordinate Zn(2+). The recognition domain (REC) stretch occupies residues 96–192; that stretch reads QEISEIFRQL…PTTKSDNFPI (97 aa). The wedge domain (WED) stretch occupies residues 193-312; it reads PLVKQKGGQY…MLNLSIDVPK (120 aa). The segment at 313–321 is linker; the sequence is IDKGVDPSI. The tract at residues 322–473 is ruvC-I; sequence IGGIDVGVKS…RKVAPNNTSK (152 aa). Catalysis depends on residues D326 and E422. A target nucleic acid-binding (TNB) region spans residues 474–508; the sequence is TCSKCGHLNNYFNFEYRKKNKFPHFKCEKCNFKEN. 2 residues coordinate Zn(2+): C475 and C478. The active site involves R490. Zn(2+) is bound by residues C500 and C503. Positions 509-529 are ruvC-II; that stretch reads ADYNAALNISNPKLKSTKEEP. The active site involves D510.

It belongs to the CRISPR-associated endonuclease Cas12f family. An asymmetric homodimer. Guide RNA is probably required for dimerization. It depends on Mg(2+) as a cofactor. Requires Zn(2+) as cofactor.

Its activity is regulated as follows. Target ssDNA cleavage is inhibited by EDTA. Activity is maximal with 5-50 mM NaCl, is less efficient at higher NaCl concentrations. Functionally, CRISPR (clustered regularly interspaced short palindromic repeat), is an adaptive immune system that provides protection against mobile genetic elements (viruses, transposable elements and conjugative plasmids). CRISPR clusters contain sequences complementary to antecedent mobile elements and target invading nucleic acids. CRISPR clusters are transcribed and processed into CRISPR RNA (crRNA), which requires a trans-encoded small RNA (tracrRNA), but not this protein (in vitro). Upon expression in E.coli of this protein, a mini CRISPR array and the probable tracrRNA, the protein associates with both RNAs. The mini system is not active in E.coli against phiX174 phage, nor is it active in protection against transformation by foreign plasmids. In vitro the purified protein-tracrRNA-crRNA complex cleaves ssDNA complementary to the crRNA; target cleavage requires both tracrRNA and crRNA, but not a protospacer adjacent motif (PAM). The tracrRNA-crRNA can be replaced by a single guide RNA (sgRNA). 2-nucleotide mismatches in the middle of the crRNA:DNA heteroduplex decrease cleavage. Cleavage occurs just downstream of the heteroduplex. Activation of this protein results in non-specific ssDNA degradation in vitro. In vitro and in E.coli (coexpressed with sgRNA) has dsDNA endonuclease activity, recognizing the 5' PAM sequence TTTR; both sgRNA and a PAM are required for activity. Cleaves the target strand 24 and the nontarget strand 22 bases upstream of the PAM (respectively), resulting in 5' overhangs. The 2 monomers interact differently with the sgRNA and target DNA. Mutagenesis of a dimeric construct shows that one of the RuvC monomers probably cleaves both DNA strands. The polypeptide is CRISPR-associated endodeoxyribonuclease Cas12f1 (Uncultured archaeon).